Here is a 1610-residue protein sequence, read N- to C-terminus: Voltage-dependent L-type calcium channel subunit alpha-1D (1610 aa).

Positions 1-99 (MMMMMMKKMQ…SKKQGNSSNS (99 aa)) are disordered. Residues 1–125 (MMMMMMKKMQ…RACISIVEWK (125 aa)) lie on the Cytoplasmic side of the membrane. Residues 37 to 51 (GPTSQPNSSKQTVLS) are compositionally biased toward polar residues. Residues 53 to 66 (QAAIDAARQAKAAQ) show a composition bias toward low complexity. Over residues 81–92 (QRKRQQYAKSKK) the composition is skewed to basic residues. An I repeat occupies 112–408 (NPIRRACISI…LVLGVLSGEF (297 aa)). A helical membrane pass occupies residues 126-144 (PFDIFILLAIFANCVALAI). Residues 145–162 (YIPFPEDDSNSTNHNLEK) are Extracellular-facing. A glycan (N-linked (GlcNAc...) asparagine) is linked at N154. The chain crosses the membrane as a helical span at residues 163 to 182 (VEYAFLIIFTVETFLKIIAY). Residues 183–194 (GLLLHPNAYVRN) lie on the Cytoplasmic side of the membrane. The helical transmembrane segment at 195–213 (GWNLLDFVIVIVGLFSVIL) threads the bilayer. The Extracellular portion of the chain corresponds to 214–234 (EQLTKETEGGNHSSGKSGGFD). N224 carries N-linked (GlcNAc...) asparagine glycosylation. Residues 235–253 (VKALRAFRVLRPLRLVSGV) traverse the membrane as a helical segment. Over 254-272 (PSLQVVLNSIIKAMVPLLH) the chain is Cytoplasmic. The chain crosses the membrane as a helical span at residues 273–292 (IALLVLFVIIIYAIIGLELF). At 293–380 (IGKMHKTCFF…WMNDAMGFEL (88 aa)) the chain is on the extracellular side. Residue N328 is glycosylated (N-linked (GlcNAc...) asparagine). E363 is a Ca(2+) binding site. A helical membrane pass occupies residues 381–405 (PWVYFVSLVIFGSFFVLNLVLGVLS). The Cytoplasmic portion of the chain corresponds to 406–522 (GEFSKEREKA…RRCRAAVKSV (117 aa)). The interval 428-445 (EQLEEDLKGYLDWITQAE) is binding to the beta subunit. The interval 448–487 (DPENEEEGGEEGKRNTSMPTSETESVNTENVSGEGETQGS) is disordered. The segment covering 462–487 (NTSMPTSETESVNTENVSGEGETQGS) has biased composition (polar residues). One copy of the II repeat lies at 508–754 (NRFNRRRCRA…VFLAIAVDNL (247 aa)). Residues 523 to 542 (TFYWLVIVLVFLNTLTISSE) traverse the membrane as a helical segment. At 543–557 (HYNQPDWLTQIQDIA) the chain is on the extracellular side. A helical transmembrane segment spans residues 558 to 576 (NKVLLALFTCEMLVKMYSL). The Cytoplasmic segment spans residues 577–584 (GLQAYFVS). Residues 585–603 (LFNRFDCFVVCGGITETIL) traverse the membrane as a helical segment. Over 604–613 (VELELMSPLG) the chain is Extracellular. The helical transmembrane segment at 614–632 (VSVFRCVRLLRIFKVTRHW) threads the bilayer. Residues 633 to 651 (TSLSNLVASLLNSMKSIAS) are Cytoplasmic-facing. The chain crosses the membrane as a helical span at residues 652–672 (LLLLLFLFIIIFSLLGMQLFG). At 673 to 726 (GKFNFDETQTKRSTFDNFPQALLTVFQILTGEDWNAVMYDGIMAYGGPSSSGMI) the chain is on the extracellular side. E704 contacts Ca(2+). The helical transmembrane segment at 727–751 (VCIYFIILFICGNYILLNVFLAIAV) threads the bilayer. The Cytoplasmic segment spans residues 752-884 (DNLADAESLN…VGCHKLINHH (133 aa)). The segment covering 765–789 (KEEAEEKERKKIARKESLENKKNNK) has biased composition (basic and acidic residues). Residues 765–846 (KEEAEEKERK…VPAGPRPRRI (82 aa)) form a disordered region. The span at 790-801 (PEVNQIANSDNK) shows a compositional bias: polar residues. Acidic residues predominate over residues 824–836 (VGEEEEEEEEEPE). The stretch at 871-1153 (NPIRVGCHKL…IFVGFVIVTF (283 aa)) is one III repeat. Residues 885 to 903 (IFTNLILVFIMLSSAALAA) form a helical membrane-spanning segment. Residues 904 to 919 (EDPIRSHSFRNTILGY) are Extracellular-facing. The chain crosses the membrane as a helical span at residues 920–939 (FDYAFTAIFTVEILLKMTTF). Topologically, residues 940–951 (GAFLHKGAFCRN) are cytoplasmic. Residues 952-970 (YFNLLDMLVVGVSLVSFGI) form a helical membrane-spanning segment. At 971–976 (QSSAIS) the chain is on the extracellular side. The helical transmembrane segment at 977–996 (VVKILRVLRVLRPLRAINRA) threads the bilayer. The Cytoplasmic segment spans residues 997 to 1015 (KGLKHVVQCVFVAIRTIGN). The chain crosses the membrane as a helical span at residues 1016 to 1035 (IMIVTTLLQFMFACIGVQLF). Over 1036-1125 (KGKFYRCTDE…AGPVYNHRVE (90 aa)) the chain is Extracellular. The dihydropyridine binding stretch occupies residues 1073–1163 (RIWQNSDFNF…QEQGEKEYKN (91 aa)). Ca(2+) is bound at residue E1099. A helical transmembrane segment spans residues 1126 to 1146 (ISIFFIIYIIIVAFFMMNIFV). The Cytoplasmic portion of the chain corresponds to 1147-1203 (GFVIVTFQEQGEKEYKNCELDKNQRQCVEYALKARPLRRYIPKNPYQYKFWYVVNSS). An IV repeat occupies 1190–1465 (NPYQYKFWYV…LFVAVIMDNF (276 aa)). The chain crosses the membrane as a helical span at residues 1204-1222 (PFEYMMFVLIMLNTLCLAM). Topologically, residues 1223–1237 (QHYEQSKMFNDAMDI) are extracellular. Residues 1238–1257 (LNMVFTGVFTVEMVLKVIAF) form a helical membrane-spanning segment. Residues 1258–1264 (KPKGYFS) lie on the Cytoplasmic side of the membrane. The helical transmembrane segment at 1265 to 1286 (DAWNTFDSLIVIGSIIDVALSE) threads the bilayer. Topologically, residues 1287–1311 (ADPTESESLPLPTATPGNSEESNRI) are extracellular. The chain crosses the membrane as a helical span at residues 1312 to 1331 (SITFFRLFRVMRLVKLLSRG). Over 1332–1350 (EGIRTLLWTFIKSFQALPY) the chain is Cytoplasmic. The chain crosses the membrane as a helical span at residues 1351–1370 (VALLIAMLFFIYAVIGMQMF). Topologically, residues 1371–1437 (GKVAMRDNNQ…GEEYTCGSNF (67 aa)) are extracellular. Residues 1418–1484 (LCDPDSDYNP…LGPHHLDEFK (67 aa)) form a dihydropyridine binding region. A phenylalkylamine binding region spans residues 1430-1473 (EYTCGSNFAIVYFISFYMLCAFLIINLFVAVIMDNFDYLTRDWS). A helical transmembrane segment spans residues 1438–1462 (AIVYFISFYMLCAFLIINLFVAVIM). The Cytoplasmic portion of the chain corresponds to 1463–1610 (DNFDYLTRDW…CFLSPSRSRS (148 aa)).

This sequence belongs to the calcium channel alpha-1 subunit (TC 1.A.1.11) family. CACNA1D subfamily. Voltage-dependent calcium channels are multisubunit complexes, consisting of alpha-1, alpha-2, beta and delta subunits in a 1:1:1:1 ratio. The channel activity is directed by the pore-forming and voltage-sensitive alpha-1 subunit. In many cases, this subunit is sufficient to generate voltage-sensitive calcium channel activity. The auxiliary subunits beta and alpha-2/delta linked by a disulfide bridge regulate the channel activity. Interacts with RIMBP2. Interacts with CABP1 and CABP4, resulting in a near elimination of calcium-dependent inactivation of the channel. As to expression, expressed in brain, heart and skeletal muscle.

It is found in the membrane. It catalyses the reaction Ca(2+)(in) = Ca(2+)(out). Functionally, voltage-sensitive calcium channels (VSCC) mediate the entry of calcium ions into excitable cells and are also involved in a variety of calcium-dependent processes, including muscle contraction, hormone or neurotransmitter release, gene expression, cell motility, cell division and cell death. The isoform alpha-1D gives rise to L-type calcium currents. Long-lasting (L-type) calcium channels belong to the 'high-voltage activated' (HVA) group. They are blocked by dihydropyridines (DHP), phenylalkylamines, and by benzothiazepines. In Mesocricetus auratus (Golden hamster), this protein is Voltage-dependent L-type calcium channel subunit alpha-1D (CACNA1D).